An 877-amino-acid polypeptide reads, in one-letter code: Valine--tRNA ligase (877 aa).

A 'HIGH' region motif is present at residues 46–56 (PYPTGSIHMGH). Positions 529 to 533 (KMSKS) match the 'KMSKS' region motif. Lysine 532 contributes to the ATP binding site.

This sequence belongs to the class-I aminoacyl-tRNA synthetase family. ValS type 2 subfamily.

The protein localises to the cytoplasm. The catalysed reaction is tRNA(Val) + L-valine + ATP = L-valyl-tRNA(Val) + AMP + diphosphate. Functionally, catalyzes the attachment of valine to tRNA(Val). As ValRS can inadvertently accommodate and process structurally similar amino acids such as threonine, to avoid such errors, it has a 'posttransfer' editing activity that hydrolyzes mischarged Thr-tRNA(Val) in a tRNA-dependent manner. This is Valine--tRNA ligase from Methanothermobacter thermautotrophicus (strain ATCC 29096 / DSM 1053 / JCM 10044 / NBRC 100330 / Delta H) (Methanobacterium thermoautotrophicum).